A 323-amino-acid polypeptide reads, in one-letter code: MIDFGNFYSLIAKNHLSHWLETLPAQIANWQREQQHGLFKQWSNAVEFLPEIKPYRLDLLHSVTAESEEPLSTGQIKRIETLMRNLMPWRKGPFSLYGVNIDTEWRSDWKWDRVLPHLSDLTGRTILDVGCGSGYHMWRMIGAGAHLAVGIDPTQLFLCQFEAVRKLLGNDQRAHLLPLGIEQLPALKAFDTVFSMGVLYHRRSPLEHLWQLKDQLVNEGELVLETLVIDGDENTVLVPGDRYAQMRNVYFIPSALALKNWLKKCGFVDIRIVDVCVTTTEEQRRTEWMVTESLSDFLDPHDPSKTVEGYPAPKRAVLIARKP.

Carboxy-S-adenosyl-L-methionine is bound by residues Lys-91, Trp-105, Lys-110, Gly-130, 152–154 (DPT), 181–182 (IE), Met-196, Tyr-200, and Arg-315.

It belongs to the class I-like SAM-binding methyltransferase superfamily. CmoB family. Homotetramer.

The catalysed reaction is carboxy-S-adenosyl-L-methionine + 5-hydroxyuridine(34) in tRNA = 5-carboxymethoxyuridine(34) in tRNA + S-adenosyl-L-homocysteine + H(+). In terms of biological role, catalyzes carboxymethyl transfer from carboxy-S-adenosyl-L-methionine (Cx-SAM) to 5-hydroxyuridine (ho5U) to form 5-carboxymethoxyuridine (cmo5U) at position 34 in tRNAs. In Escherichia coli O8 (strain IAI1), this protein is tRNA U34 carboxymethyltransferase.